A 387-amino-acid polypeptide reads, in one-letter code: 3-ketoacyl-CoA thiolase (387 aa).

The Acyl-thioester intermediate role is filled by C91. Residues H343 and C373 each act as proton acceptor in the active site.

It belongs to the thiolase-like superfamily. Thiolase family. As to quaternary structure, heterotetramer of two alpha chains (FadB) and two beta chains (FadA).

The protein resides in the cytoplasm. The catalysed reaction is an acyl-CoA + acetyl-CoA = a 3-oxoacyl-CoA + CoA. Its pathway is lipid metabolism; fatty acid beta-oxidation. In terms of biological role, catalyzes the final step of fatty acid oxidation in which acetyl-CoA is released and the CoA ester of a fatty acid two carbons shorter is formed. The sequence is that of 3-ketoacyl-CoA thiolase from Shewanella baltica (strain OS155 / ATCC BAA-1091).